Consider the following 468-residue polypeptide: Nicotinamide phosphoribosyltransferase (468 aa).

Arg-180 provides a ligand contact to diphosphate. Asp-203 contacts beta-nicotinamide D-ribonucleotide. Diphosphate-binding residues include His-229 and Arg-293. The residue at position 229 (His-229) is a Phosphohistidine; by autocatalysis. Residues Asp-335 and Arg-373 each contribute to the beta-nicotinamide D-ribonucleotide site.

Belongs to the NAPRTase family. As to quaternary structure, homodimer. The dimeric structure consists of two protomers arranged head to tail, with domain A on one protomer interacting with domain B on the other protomer. Phosphorylation at His-229 plays a crucial role in enhancing the substrate affinity and is important for maintaining enzymatic activity.

It catalyses the reaction beta-nicotinamide D-ribonucleotide + diphosphate = 5-phospho-alpha-D-ribose 1-diphosphate + nicotinamide + H(+). It functions in the pathway cofactor biosynthesis; NAD(+) biosynthesis; nicotinamide D-ribonucleotide from 5-phospho-alpha-D-ribose 1-diphosphate and nicotinamide: step 1/1. Its activity is regulated as follows. ATP-dependent autophosphorylation plays a vital role in nicotinamide binding and enzyme activation. Activity is inhibited by FK866. In terms of biological role, catalyzes the condensation of nicotinamide with 5-phosphoribosyl-1-pyrophosphate to yield nicotinamide mononucleotide, an intermediate in the biosynthesis of NAD. Plays an important role in the biosynthesis of NAD via the nicotinamide (NAM) salvage pathway. Is also capable of hydrolyzing ATP and shows ATP-dependent autophosphorylation activity. The chain is Nicotinamide phosphoribosyltransferase from Xanthomonas campestris pv. campestris (strain 8004).